Consider the following 118-residue polypeptide: Large ribosomal subunit protein uL18 (118 aa).

This sequence belongs to the universal ribosomal protein uL18 family. In terms of assembly, part of the 50S ribosomal subunit; part of the 5S rRNA/L5/L18/L25 subcomplex. Contacts the 5S and 23S rRNAs.

Functionally, this is one of the proteins that bind and probably mediate the attachment of the 5S RNA into the large ribosomal subunit, where it forms part of the central protuberance. This chain is Large ribosomal subunit protein uL18, found in Rickettsia felis (strain ATCC VR-1525 / URRWXCal2) (Rickettsia azadi).